The sequence spans 247 residues: ATP synthase subunit a, chloroplastic (247 aa).

5 helical membrane-spanning segments follow: residues 38 to 58 (QVLI…TVAV), 95 to 115 (VPFI…GALL), 134 to 154 (INTT…AGLT), 199 to 219 (LVVV…VMFL), and 220 to 240 (GLFT…AYIG).

Belongs to the ATPase A chain family. In terms of assembly, F-type ATPases have 2 components, CF(1) - the catalytic core - and CF(0) - the membrane proton channel. CF(1) has five subunits: alpha(3), beta(3), gamma(1), delta(1), epsilon(1). CF(0) has four main subunits: a, b, b' and c.

The protein resides in the plastid. Its subcellular location is the chloroplast thylakoid membrane. Its function is as follows. Key component of the proton channel; it plays a direct role in the translocation of protons across the membrane. The chain is ATP synthase subunit a, chloroplastic from Acorus calamus var. americanus (American sweet flag).